The sequence spans 148 residues: Macrodomain Ter protein (148 aa).

This sequence belongs to the MatP family. As to quaternary structure, homodimer.

The protein resides in the cytoplasm. Required for spatial organization of the terminus region of the chromosome (Ter macrodomain) during the cell cycle. Prevents early segregation of duplicated Ter macrodomains during cell division. Binds specifically to matS, which is a 13 bp signature motif repeated within the Ter macrodomain. This Photobacterium profundum (strain SS9) protein is Macrodomain Ter protein.